A 547-amino-acid chain; its full sequence is Mercuric reductase (547 aa).

Residues 4–67 (NSYKIPIQGM…NISAAGYQPG (64 aa)) enclose the HMA domain. Residues Cys15 and Cys18 each coordinate a metal cation. FAD-binding residues include Ala97, Gly117, and Thr122. A disulfide bridge connects residues Cys123 and Cys128. FAD contacts are provided by Lys132, Ala196, Asp388, and Val396. Residues Cys544 and Cys545 each coordinate Hg(2+).

Belongs to the class-I pyridine nucleotide-disulfide oxidoreductase family. In terms of assembly, homodimer. FAD is required as a cofactor.

It carries out the reaction Hg + NADP(+) + H(+) = Hg(2+) + NADPH. Its function is as follows. Resistance to Hg(2+) in bacteria appears to be governed by a specialized system which includes mercuric reductase. MerA protein is responsible for volatilizing mercury as Hg(0). This Staphylococcus aureus protein is Mercuric reductase (merA).